A 313-amino-acid chain; its full sequence is tRNA dimethylallyltransferase (313 aa).

11–18 (GPTACGKT) is a binding site for ATP. Residue 13–18 (TACGKT) participates in substrate binding. Interaction with substrate tRNA regions lie at residues 36 to 39 (DSAL), 160 to 164 (QRIER), and 243 to 248 (RCVGYR).

This sequence belongs to the IPP transferase family. Monomer. It depends on Mg(2+) as a cofactor.

The enzyme catalyses adenosine(37) in tRNA + dimethylallyl diphosphate = N(6)-dimethylallyladenosine(37) in tRNA + diphosphate. Its function is as follows. Catalyzes the transfer of a dimethylallyl group onto the adenine at position 37 in tRNAs that read codons beginning with uridine, leading to the formation of N6-(dimethylallyl)adenosine (i(6)A). This is tRNA dimethylallyltransferase from Neisseria meningitidis serogroup C (strain 053442).